A 288-amino-acid chain; its full sequence is G1/S-specific cyclin-D2 (288 aa).

Residues 26–151 form the Cyclin N-terminal domain; that stretch reads VLQNLLTIEE…VVLGKLKWNL (126 aa). The interval 264 to 288 is disordered; that stretch reads DQDGSKSEDELDQASTPTDVRDIDL. Ser-270 carries the post-translational modification Phosphoserine. Residue Thr-279 is modified to Phosphothreonine.

The protein belongs to the cyclin family. Cyclin D subfamily. Interacts with either CDK4 or CDK6 protein kinase to form a serine/threonine kinase holoenzyme complex. The cyclin subunit imparts substrate specificity to the complex. Post-translationally, phosphorylation at Thr-279 by MAP kinases is required for ubiquitination and degradation by the DCX(AMBRA1) complex. Ubiquitinated by the DCX(AMBRA1) complex during the transition from G1 to S cell phase, leading to its degradation: ubiquitination is dependent on Thr-279 phosphorylation. The DCX(AMBRA1) complex represents the major regulator of CCND2 stability during the G1/S transition. Polyubiquitinated by the SCF(FBXL2) complex, leading to proteasomal degradation.

It is found in the nucleus. It localises to the cytoplasm. Its subcellular location is the nucleus membrane. Functionally, regulatory component of the cyclin D2-CDK4 (DC) complex that phosphorylates and inhibits members of the retinoblastoma (RB) protein family including RB1 and regulates the cell-cycle during G(1)/S transition. Phosphorylation of RB1 allows dissociation of the transcription factor E2F from the RB/E2F complex and the subsequent transcription of E2F target genes which are responsible for the progression through the G(1) phase. Hypophosphorylates RB1 in early G(1) phase. Cyclin D-CDK4 complexes are major integrators of various mitogenenic and antimitogenic signals. This is G1/S-specific cyclin-D2 (CCND2) from Sus scrofa (Pig).